The sequence spans 402 residues: CCA-adding enzyme (402 aa).

ATP-binding residues include glycine 32 and arginine 35. Residues glycine 32 and arginine 35 each contribute to the CTP site. Positions 45 and 47 each coordinate Mg(2+). 5 residues coordinate ATP: arginine 119, aspartate 162, arginine 165, arginine 168, and arginine 171. Residues arginine 119, aspartate 162, arginine 165, arginine 168, and arginine 171 each contribute to the CTP site.

It belongs to the tRNA nucleotidyltransferase/poly(A) polymerase family. Bacterial CCA-adding enzyme type 3 subfamily. As to quaternary structure, homodimer. It depends on Mg(2+) as a cofactor.

It catalyses the reaction a tRNA precursor + 2 CTP + ATP = a tRNA with a 3' CCA end + 3 diphosphate. It carries out the reaction a tRNA with a 3' CCA end + 2 CTP + ATP = a tRNA with a 3' CCACCA end + 3 diphosphate. Its function is as follows. Catalyzes the addition and repair of the essential 3'-terminal CCA sequence in tRNAs without using a nucleic acid template. Adds these three nucleotides in the order of C, C, and A to the tRNA nucleotide-73, using CTP and ATP as substrates and producing inorganic pyrophosphate. tRNA 3'-terminal CCA addition is required both for tRNA processing and repair. Also involved in tRNA surveillance by mediating tandem CCA addition to generate a CCACCA at the 3' terminus of unstable tRNAs. While stable tRNAs receive only 3'-terminal CCA, unstable tRNAs are marked with CCACCA and rapidly degraded. In Lactococcus lactis subsp. cremoris (strain SK11), this protein is CCA-adding enzyme.